Reading from the N-terminus, the 295-residue chain is MQNKEPDEFRESTSIFQIWLRFRQNTIALFSFYLLIALIFTALFASYLAPYADNRQFIGQELMPPSWVDRGKIAFFFGTDDLGRDILSRLIMGTRYTLGSALLVVFSVAIIGGALGIIAGLLKGIKARFVGHIFDAFLSLPILLIAVVISTLMEPSLWNAMFATLLAILPYFIHTIYRAIQKELEKDYVVMLKLEGISNQALLKSTILPNITVIYIQEVARAFVIAVLDISALSFISLGAQRPTPEWGAMIKDSLELLYLAPWTVLLPGFAIIFTILLSIIFSNGLTKAINQHQE.

Transmembrane regions (helical) follow at residues I27 to Y47, L102 to L122, F129 to I149, L157 to Y177, V219 to G239, and P262 to F282. The region spanning L98–L278 is the ABC transmembrane type-1 domain.

It belongs to the binding-protein-dependent transport system permease family. OppBC subfamily.

The protein resides in the cell inner membrane. Involved in a peptide intake transport system that plays a role in the resistance to antimicrobial peptides. The chain is Peptide transport system permease protein SapC (sapC) from Haemophilus influenzae (strain ATCC 51907 / DSM 11121 / KW20 / Rd).